We begin with the raw amino-acid sequence, 70 residues long: U2-agatoxin-Ao1l (70 aa).

The signal sequence occupies residues 1–20; the sequence is MRAIISLLLISAMVFSIIEA. The propeptide occupies 21 to 34; that stretch reads VPEEEGLQLSEDER. Disulfide bonds link C37/C53, C44/C58, and C52/C68. L69 is subject to Leucine amide.

It belongs to the neurotoxin 01 (U2-agtx) family. In terms of tissue distribution, expressed by the venom gland.

Its subcellular location is the secreted. Insect active toxin causing rapid but reversible paralysis in crickets. No activity shown in mammals. Does not show effect on mammalian voltage-gated calcium channels. The protein is U2-agatoxin-Ao1l of Agelena orientalis (Funnel-web spider).